The sequence spans 321 residues: Lipoyl synthase (321 aa).

[4Fe-4S] cluster is bound by residues C68, C73, C79, C94, C98, C101, and S308. The region spanning 80–297 (FNHGTATFMI…KAEALAMGFT (218 aa)) is the Radical SAM core domain.

The protein belongs to the radical SAM superfamily. Lipoyl synthase family. Requires [4Fe-4S] cluster as cofactor.

The protein localises to the cytoplasm. It catalyses the reaction [[Fe-S] cluster scaffold protein carrying a second [4Fe-4S](2+) cluster] + N(6)-octanoyl-L-lysyl-[protein] + 2 oxidized [2Fe-2S]-[ferredoxin] + 2 S-adenosyl-L-methionine + 4 H(+) = [[Fe-S] cluster scaffold protein] + N(6)-[(R)-dihydrolipoyl]-L-lysyl-[protein] + 4 Fe(3+) + 2 hydrogen sulfide + 2 5'-deoxyadenosine + 2 L-methionine + 2 reduced [2Fe-2S]-[ferredoxin]. It functions in the pathway protein modification; protein lipoylation via endogenous pathway; protein N(6)-(lipoyl)lysine from octanoyl-[acyl-carrier-protein]: step 2/2. In terms of biological role, catalyzes the radical-mediated insertion of two sulfur atoms into the C-6 and C-8 positions of the octanoyl moiety bound to the lipoyl domains of lipoate-dependent enzymes, thereby converting the octanoylated domains into lipoylated derivatives. The polypeptide is Lipoyl synthase (Escherichia coli O9:H4 (strain HS)).